We begin with the raw amino-acid sequence, 366 residues long: tRNA/tmRNA (uracil-C(5))-methyltransferase (366 aa).

5 residues coordinate S-adenosyl-L-methionine: glutamine 190, tyrosine 218, asparagine 223, glutamate 239, and aspartate 299. The active-site Nucleophile is the cysteine 324. Glutamate 358 (proton acceptor) is an active-site residue.

This sequence belongs to the class I-like SAM-binding methyltransferase superfamily. RNA M5U methyltransferase family. TrmA subfamily.

It carries out the reaction uridine(54) in tRNA + S-adenosyl-L-methionine = 5-methyluridine(54) in tRNA + S-adenosyl-L-homocysteine + H(+). The enzyme catalyses uridine(341) in tmRNA + S-adenosyl-L-methionine = 5-methyluridine(341) in tmRNA + S-adenosyl-L-homocysteine + H(+). Dual-specificity methyltransferase that catalyzes the formation of 5-methyluridine at position 54 (m5U54) in all tRNAs, and that of position 341 (m5U341) in tmRNA (transfer-mRNA). The polypeptide is tRNA/tmRNA (uracil-C(5))-methyltransferase (Escherichia coli (strain UTI89 / UPEC)).